We begin with the raw amino-acid sequence, 567 residues long: UPF0313 protein Tpet_0582 (567 aa).

One can recognise a Radical SAM core domain in the interval 288-560 (KAIETVKFSI…NKMKENVLFK (273 aa)). The [4Fe-4S] cluster site is built by Cys303, Cys307, and Cys310.

It belongs to the UPF0313 family. [4Fe-4S] cluster is required as a cofactor.

This chain is UPF0313 protein Tpet_0582, found in Thermotoga petrophila (strain ATCC BAA-488 / DSM 13995 / JCM 10881 / RKU-1).